A 418-amino-acid chain; its full sequence is Cyclin-A1 (418 aa).

The protein belongs to the cyclin family. Cyclin AB subfamily. In terms of assembly, interacts with the CDK1 and the CDK2 protein kinases to form a serine/threonine kinase holoenzyme complex. The cyclin subunit imparts substrate specificity to the complex.

It is found in the nucleus. May be involved in the control of the cell cycle at the G1/S (start) and G2/M (mitosis) transitions. The chain is Cyclin-A1 (ccna1) from Xenopus laevis (African clawed frog).